The following is a 48-amino-acid chain: Acidic phospholipase A2 (48 aa).

Residues tyrosine 27, glycine 29, and glycine 31 each contribute to the Ca(2+) site. The cysteines at positions 28 and 44 are disulfide-linked. Residue histidine 47 is part of the active site. Residue aspartate 48 coordinates Ca(2+).

It belongs to the phospholipase A2 family. Group II subfamily. D49 sub-subfamily. In terms of assembly, monomer. The cofactor is Ca(2+). As to expression, expressed by the venom gland.

It localises to the secreted. It carries out the reaction a 1,2-diacyl-sn-glycero-3-phosphocholine + H2O = a 1-acyl-sn-glycero-3-phosphocholine + a fatty acid + H(+). Inhibited by EDTA. Inhibited by Ba(2+), Cu(+), Fe(2+) and Zn(2+) ions and, to a lesser extent, by Mn(2+) and Mg(2+) ions. In terms of biological role, snake venom phospholipase A2 (PLA2) that shows myotoxicity and induces paw edema in mice. Exhibits indirect hemolytic activity. Inhibits platelet aggregation induced by ADP and collagen. PLA2 catalyzes the calcium-dependent hydrolysis of the 2-acyl groups in 3-sn-phosphoglycerides. This Bothrops pauloensis (Neuwied's lancehead) protein is Acidic phospholipase A2.